The chain runs to 273 residues: Undecaprenyl-diphosphatase (273 aa).

Helical transmembrane passes span 13 to 35 (LGVV…IIVG), 45 to 65 (ANTF…VMFW), 90 to 110 (LSLI…LIFH), 116 to 136 (LFNP…LIAA), 157 to 177 (AFVI…RSGA), 190 to 210 (YAAS…ATVL), 222 to 242 (GDVP…LIAI), and 252 to 272 (ISFI…YVVF).

Belongs to the UppP family.

Its subcellular location is the cell inner membrane. It catalyses the reaction di-trans,octa-cis-undecaprenyl diphosphate + H2O = di-trans,octa-cis-undecaprenyl phosphate + phosphate + H(+). In terms of biological role, catalyzes the dephosphorylation of undecaprenyl diphosphate (UPP). Confers resistance to bacitracin. This Klebsiella pneumoniae subsp. pneumoniae (strain ATCC 700721 / MGH 78578) protein is Undecaprenyl-diphosphatase.